The chain runs to 602 residues: Leucine-rich repeat-containing protein 40 (602 aa).

A disordered region spans residues 1–22 (MSRLKRIAGQDPRAGFKEGGRD). Ser71 carries the phosphoserine modification. LRR repeat units lie at residues 83 to 104 (DLTK…LRLL), 106 to 127 (ALTV…IREL), 129 to 150 (NLQK…ITNL), 152 to 173 (NLKC…FEQF), 175 to 196 (NLED…FSSL), 198 to 219 (SLVR…INRM), 221 to 242 (RLKH…LAGM), 244 to 265 (SLEL…PSCS), 266 to 286 (LLKE…EHLK), 290 to 311 (SILV…IILL), 313 to 335 (SLER…GNLH), 336 to 356 (LKFL…IINK), 400 to 421 (TLKI…VFDA), 426 to 447 (IITS…MVEL), 450 to 472 (MVSD…CVLQ), 473 to 494 (KLTF…VESL), 496 to 517 (RLQT…LYRI), 519 to 540 (TLET…KMKM), 543 to 564 (NLTT…LGNC), and 566 to 586 (NLRT…AILM).

The chain is Leucine-rich repeat-containing protein 40 (LRRC40) from Pongo abelii (Sumatran orangutan).